The sequence spans 264 residues: tRNA (guanine-N(1)-)-methyltransferase (264 aa).

149 to 154 (IGDYVL) contacts S-adenosyl-L-methionine.

Belongs to the RNA methyltransferase TrmD family. Homodimer.

It is found in the cytoplasm. It carries out the reaction guanosine(37) in tRNA + S-adenosyl-L-methionine = N(1)-methylguanosine(37) in tRNA + S-adenosyl-L-homocysteine + H(+). Specifically methylates guanosine-37 in various tRNAs. This chain is tRNA (guanine-N(1)-)-methyltransferase, found in Methylobacillus flagellatus (strain ATCC 51484 / DSM 6875 / VKM B-1610 / KT).